We begin with the raw amino-acid sequence, 392 residues long: MIDCRYYQQNECRSCQWLEIPYSQQLAEKQHHLKQQLISINCDKAQWLAPFQSNEQCFRNKAKMLVSGSVERPILGILKNPNDPQSAIDLCDCPLYPARFSIIFSILKDFIGRAGLVPYNIAKQKGELKYILLTESIATGKLMLRFVLRTENKLPLIRRELPKLLEKLPHLEVVSVNLQPLHAAILEGEQEIFLTEQQFLPENFNSIPLFIRPQGFFQTNPKVAEGLYATAQQWVSELPIYNLWDLFCGVGGFGLHCAKALQEKWGKPIKLTGIEISSSAILAASHSAKILGLEHVNFQSLDAASVIENKNENKPDLVIVNPPRRGIGKELSEFLNQIQPHFILYSSCNAMTMGKDLQHLTCYKPLKIQLFDMFPQTSHYEVLVLLERKKIN.

Cys-4, Cys-12, Cys-15, and Cys-93 together coordinate [4Fe-4S] cluster. S-adenosyl-L-methionine-binding residues include Gln-218, Phe-247, Glu-275, and Asn-321. The Nucleophile role is filled by Cys-348.

Belongs to the class I-like SAM-binding methyltransferase superfamily. RNA M5U methyltransferase family. RlmC subfamily.

The catalysed reaction is uridine(747) in 23S rRNA + S-adenosyl-L-methionine = 5-methyluridine(747) in 23S rRNA + S-adenosyl-L-homocysteine + H(+). Its function is as follows. Catalyzes the formation of 5-methyl-uridine at position 747 (m5U747) in 23S rRNA. The polypeptide is 23S rRNA (uracil(747)-C(5))-methyltransferase RlmC (Haemophilus influenzae (strain 86-028NP)).